Reading from the N-terminus, the 227-residue chain is Urease subunit gamma/beta (227 aa).

The tract at residues 1 to 101 (MRLTPTERDR…LAVVADPVGG (101 aa)) is urease gamma. The urease beta stretch occupies residues 102–227 (GGLGDDAPGA…AACGYLGADR (126 aa)).

This sequence in the N-terminal section; belongs to the urease gamma subunit family. It in the C-terminal section; belongs to the urease beta subunit family. Heterohexamer of 3 UreC (alpha) and 3 UreAB (gamma/beta) subunits.

The protein localises to the cytoplasm. It carries out the reaction urea + 2 H2O + H(+) = hydrogencarbonate + 2 NH4(+). The protein operates within nitrogen metabolism; urea degradation; CO(2) and NH(3) from urea (urease route): step 1/1. The polypeptide is Urease subunit gamma/beta (Streptomyces coelicolor (strain ATCC BAA-471 / A3(2) / M145)).